The primary structure comprises 495 residues: AAA-ATPase At2g18193 (495 aa).

The chain crosses the membrane as a helical span at residues 7–28; sequence FSFSPSSLFSAYASLTGFLMLF. An ATP-binding site is contributed by 250–257; that stretch reads GPPGTGKS. Residues 451 to 495 are disordered; sequence EVSICKATDDDEKQNGSLGCVKKKKKGGKQKGKGKGKGKAKTYLI. Residues 471 to 495 show a composition bias toward basic residues; that stretch reads VKKKKKGGKQKGKGKGKGKAKTYLI.

It belongs to the AAA ATPase family. BCS1 subfamily. Mg(2+) serves as cofactor.

It localises to the membrane. It carries out the reaction ATP + H2O = ADP + phosphate + H(+). The polypeptide is AAA-ATPase At2g18193 (Arabidopsis thaliana (Mouse-ear cress)).